Here is a 717-residue protein sequence, read N- to C-terminus: F-box only protein 42 (717 aa).

Residues 1 to 30 (MASSSDSEDDSFMAVDQEETVLEGTMDQDE) are compositionally biased toward acidic residues. The tract at residues 1–34 (MASSSDSEDDSFMAVDQEETVLEGTMDQDEEPHP) is disordered. The 50-residue stretch at 44–93 (NRSMSELPEEVLEYILSFLSPYQEHKTAALVCKQWYRLIKGVAHQCYHGF) folds into the F-box domain. Kelch repeat units follow at residues 132–184 (SMYV…VYKD), 186–242 (LVLF…VIDD), 244–293 (MIVF…VIDD), and 295–342 (TILI…LWCH). The segment at 361–474 (RAPLSPSLNS…PSTPSAPEGY (114 aa)) is disordered. Positions 363–376 (PLSPSLNSRPSPIS) are enriched in low complexity. A phosphoserine mark is found at S365 and S373. T378 carries the phosphothreonine modification. Composition is skewed to polar residues over residues 416 to 426 (QRQTPSGSREG) and 455 to 469 (SLDS…STPS). S552 is subject to Phosphoserine. Residues 570–596 (GPSASAALSPPLGSSPGSPGSQSLSSG) show a composition bias toward low complexity. A disordered region spans residues 570–631 (GPSASAALSP…GHHPPQSLNV (62 aa)).

Component of some SCF complex, composed of CUL1, SKP1, RBX1 and FBXO42. Interacts (via the kelch domain) with p53/TP53; interaction is direct.

In terms of biological role, substrate-recognition component of some SCF (SKP1-CUL1-F-box protein)-type E3 ubiquitin ligase complex. Specifically recognizes p53/TP53, promoting its ubiquitination and degradation. The sequence is that of F-box only protein 42 (FBXO42) from Homo sapiens (Human).